The following is a 341-amino-acid chain: Probable cytosolic iron-sulfur protein assembly protein Ciao1 (341 aa).

WD repeat units lie at residues 12-51, 58-97, 102-141, 151-190, 197-236, 255-294, and 305-341; these read GHAGRVWSAAWHPGGKLFASCGEDKTIRVWNKSDTDRWVA, GHTRTIRELAWSCCGHYLASASFDTTVAVWDKKSGEFECN, GHDNEVKSVTWSRSGNLLATCSRDKSVWIWEIHHAPDQED, GHTQDVKKVCWHPQEDLLASASYDNTIRMYRQDLADSEWE, SHSSTVWSISFDATGQRLASCSEDTTVKVWQQYGPDNALG, YHSRSVYDIDWCKQTGLLATACGDDTVRIFREASDSDRNE, and AHSQDANKVAWHPTVPGLLLTASDDGEIKLWQYVDAD.

The protein belongs to the WD repeat CIA1 family.

Its function is as follows. Essential component of the cytosolic iron-sulfur (Fe/S) protein assembly machinery. Required for the maturation of extramitochondrial Fe/S proteins. In Anopheles gambiae (African malaria mosquito), this protein is Probable cytosolic iron-sulfur protein assembly protein Ciao1.